Reading from the N-terminus, the 252-residue chain is DNA-(apurinic or apyrimidinic site) lyase Nei2 (252 aa).

The Schiff-base intermediate with DNA role is filled by Pro2. Glu3 acts as the Proton donor in catalysis. Residue Lys51 is the Proton donor (in beta-elimination) of the active site. Residues 216-250 (WVYGRAGEPCRRCGTLIQTDRGGERVTYWCPVCQT) form an FPG-type zinc finger. Residues Cys225, Cys228, Cys245, and Cys248 each coordinate Zn(2+).

Belongs to the FPG family. As to quaternary structure, monomer. Zn(2+) is required as a cofactor.

It carries out the reaction 2'-deoxyribonucleotide-(2'-deoxyribose 5'-phosphate)-2'-deoxyribonucleotide-DNA = a 3'-end 2'-deoxyribonucleotide-(2,3-dehydro-2,3-deoxyribose 5'-phosphate)-DNA + a 5'-end 5'-phospho-2'-deoxyribonucleoside-DNA + H(+). Functionally, involved in base excision repair of DNA damaged by oxidation or by mutagenic agents. Acts as DNA glycosylase that recognizes and removes damaged bases. Involved in the repair of psoralen-UVA DNA cross-links. A lyase that cleaves single-stranded (ss)DNA but not double-stranded (ds)DNA with an abasic site. Has 5-hydroxyuracil (5-OH-U) glycosylase activity on ssDNA with 5-OH-U, with 10-fold less activity on dsDNA, but weak to no uracil glycosylase activity. Has weak glycosylase activity on thymine glycol and dihydrothymine residues in ssDNA. Cleaves the DNA backbone by beta-delta elimination to generate a single-strand break at the site of the removed base with both 3'- and 5'-phosphates. This chain is DNA-(apurinic or apyrimidinic site) lyase Nei2, found in Mycolicibacterium smegmatis (strain ATCC 700084 / mc(2)155) (Mycobacterium smegmatis).